A 90-amino-acid chain; its full sequence is Spore coat protein F-like protein YgzC (90 aa).

Belongs to the CotF family.

The protein resides in the spore coat. The sequence is that of Spore coat protein F-like protein YgzC (ygzC) from Bacillus subtilis (strain 168).